The following is an 879-amino-acid chain: Alanine--tRNA ligase (879 aa).

Zn(2+)-binding residues include His570, His574, Cys672, and His676.

It belongs to the class-II aminoacyl-tRNA synthetase family. It depends on Zn(2+) as a cofactor.

It localises to the cytoplasm. It catalyses the reaction tRNA(Ala) + L-alanine + ATP = L-alanyl-tRNA(Ala) + AMP + diphosphate. Its function is as follows. Catalyzes the attachment of alanine to tRNA(Ala) in a two-step reaction: alanine is first activated by ATP to form Ala-AMP and then transferred to the acceptor end of tRNA(Ala). Also edits incorrectly charged Ser-tRNA(Ala) and Gly-tRNA(Ala) via its editing domain. This chain is Alanine--tRNA ligase, found in Nitratidesulfovibrio vulgaris (strain ATCC 29579 / DSM 644 / CCUG 34227 / NCIMB 8303 / VKM B-1760 / Hildenborough) (Desulfovibrio vulgaris).